Reading from the N-terminus, the 117-residue chain is MRHRKAGRKFGRRTNPRKNLFRNLAVSLILHERMTTTLAKAKTIQPIVERLVTLAREDTDHHRRLAWAQLGDQRAVAKLFDVIAPRFVGQPGGYTRIYRIGQRRGDGAPLALIEFVA.

The protein belongs to the bacterial ribosomal protein bL17 family. As to quaternary structure, part of the 50S ribosomal subunit. Contacts protein L32.

This is Large ribosomal subunit protein bL17 from Thermomicrobium roseum (strain ATCC 27502 / DSM 5159 / P-2).